A 271-amino-acid polypeptide reads, in one-letter code: Eukaryotic translation initiation factor 3 subunit G (271 aa).

Disordered stretches follow at residues 1-26, 63-119, and 147-187; these read MSTT…TNPD, AQRK…AQKL, and TTSS…RDDS. S77 is subject to Phosphoserine. Residues 188 to 267 form the RRM domain; the sequence is TTLKVSQLNS…LILHLEWSKK (80 aa).

Belongs to the eIF-3 subunit G family. Component of the eukaryotic translation initiation factor 3 (eIF-3) complex.

It is found in the cytoplasm. RNA-binding component of the eukaryotic translation initiation factor 3 (eIF-3) complex, which is involved in protein synthesis of a specialized repertoire of mRNAs and, together with other initiation factors, stimulates binding of mRNA and methionyl-tRNAi to the 40S ribosome. The eIF-3 complex specifically targets and initiates translation of a subset of mRNAs involved in cell proliferation. This subunit can bind 18S rRNA. The protein is Eukaryotic translation initiation factor 3 subunit G of Scheffersomyces stipitis (strain ATCC 58785 / CBS 6054 / NBRC 10063 / NRRL Y-11545) (Yeast).